A 714-amino-acid chain; its full sequence is Phosphoribosylformylglycinamidine synthase subunit PurL (714 aa).

Residue His-34 is part of the active site. Tyr-37 lines the ATP pocket. Position 78 (Glu-78) interacts with Mg(2+). Substrate-binding positions include 79–82 and Arg-101; that span reads SHNH. Catalysis depends on His-80, which acts as the Proton acceptor. Mg(2+) is bound at residue Asp-102. Gln-226 serves as a coordination point for substrate. Mg(2+) is bound at residue Asp-254. 298 to 300 provides a ligand contact to substrate; the sequence is ESQ. Positions 474 and 511 each coordinate ATP. Asn-512 provides a ligand contact to Mg(2+). Ser-514 is a substrate binding site.

This sequence belongs to the FGAMS family. In terms of assembly, monomer. Part of the FGAM synthase complex composed of 1 PurL, 1 PurQ and 2 PurS subunits.

The protein resides in the cytoplasm. It carries out the reaction N(2)-formyl-N(1)-(5-phospho-beta-D-ribosyl)glycinamide + L-glutamine + ATP + H2O = 2-formamido-N(1)-(5-O-phospho-beta-D-ribosyl)acetamidine + L-glutamate + ADP + phosphate + H(+). It participates in purine metabolism; IMP biosynthesis via de novo pathway; 5-amino-1-(5-phospho-D-ribosyl)imidazole from N(2)-formyl-N(1)-(5-phospho-D-ribosyl)glycinamide: step 1/2. In terms of biological role, part of the phosphoribosylformylglycinamidine synthase complex involved in the purines biosynthetic pathway. Catalyzes the ATP-dependent conversion of formylglycinamide ribonucleotide (FGAR) and glutamine to yield formylglycinamidine ribonucleotide (FGAM) and glutamate. The FGAM synthase complex is composed of three subunits. PurQ produces an ammonia molecule by converting glutamine to glutamate. PurL transfers the ammonia molecule to FGAR to form FGAM in an ATP-dependent manner. PurS interacts with PurQ and PurL and is thought to assist in the transfer of the ammonia molecule from PurQ to PurL. This Methanothermobacter marburgensis (strain ATCC BAA-927 / DSM 2133 / JCM 14651 / NBRC 100331 / OCM 82 / Marburg) (Methanobacterium thermoautotrophicum) protein is Phosphoribosylformylglycinamidine synthase subunit PurL.